Reading from the N-terminus, the 316-residue chain is Ubiquinol oxidase, mitochondrial (316 aa).

A mitochondrion-targeting transit peptide spans 1 to 26; the sequence is MGVRAQPLLARSLITTTQPWILSARS. A helical transmembrane segment spans residues 124 to 144; that stretch reads VHRAVVLETVAAVPGMVAGML. 3 residues coordinate Fe cation: Glu-131, Glu-170, and His-173. A helical membrane pass occupies residues 189–209; the sequence is MLVALVQTLFFNVYFLAYMLF. Residues Glu-221, Glu-272, and His-275 each contribute to the Fe cation site.

The protein belongs to the alternative oxidase family. Requires Fe cation as cofactor.

The protein resides in the mitochondrion inner membrane. The enzyme catalyses 2 a ubiquinol + O2 = 2 a ubiquinone + 2 H2O. Functionally, alternative oxidase which function may be to reoxidize reducing equivalents produced by glycolysis such as ubiquinol. The protein is Ubiquinol oxidase, mitochondrial (AOX) of Batrachochytrium dendrobatidis (strain JAM81 / FGSC 10211) (Frog chytrid fungus).